The chain runs to 175 residues: ATP synthase subunit b (175 aa).

A helical transmembrane segment spans residues 20–40; that stretch reads LIFWTAITFVIVLLILKKIAW.

The protein belongs to the ATPase B chain family. As to quaternary structure, F-type ATPases have 2 components, F(1) - the catalytic core - and F(0) - the membrane proton channel. F(1) has five subunits: alpha(3), beta(3), gamma(1), delta(1), epsilon(1). F(0) has four main subunits: a(1), b(2) and c(10-14). The alpha and beta chains form an alternating ring which encloses part of the gamma chain. F(1) is attached to F(0) by a central stalk formed by the gamma and epsilon chains, while a peripheral stalk is formed by the delta and b chains.

The protein localises to the cell inner membrane. F(1)F(0) ATP synthase produces ATP from ADP in the presence of a proton or sodium gradient. F-type ATPases consist of two structural domains, F(1) containing the extramembraneous catalytic core and F(0) containing the membrane proton channel, linked together by a central stalk and a peripheral stalk. During catalysis, ATP synthesis in the catalytic domain of F(1) is coupled via a rotary mechanism of the central stalk subunits to proton translocation. Its function is as follows. Component of the F(0) channel, it forms part of the peripheral stalk, linking F(1) to F(0). The chain is ATP synthase subunit b from Pelodictyon phaeoclathratiforme (strain DSM 5477 / BU-1).